Here is a 283-residue protein sequence, read N- to C-terminus: NAD kinase (283 aa).

Aspartate 67 (proton acceptor) is an active-site residue. Residues 67–68 (DG), arginine 72, 136–137 (NE), lysine 147, arginine 164, aspartate 166, 177–182 (TAYSMS), and glutamine 236 contribute to the NAD(+) site.

Belongs to the NAD kinase family. A divalent metal cation serves as cofactor.

Its subcellular location is the cytoplasm. The catalysed reaction is NAD(+) + ATP = ADP + NADP(+) + H(+). Involved in the regulation of the intracellular balance of NAD and NADP, and is a key enzyme in the biosynthesis of NADP. Catalyzes specifically the phosphorylation on 2'-hydroxyl of the adenosine moiety of NAD to yield NADP. The sequence is that of NAD kinase from Methanothermobacter thermautotrophicus (strain ATCC 29096 / DSM 1053 / JCM 10044 / NBRC 100330 / Delta H) (Methanobacterium thermoautotrophicum).